Reading from the N-terminus, the 124-residue chain is Small ribosomal subunit protein bS6 (124 aa).

This sequence belongs to the bacterial ribosomal protein bS6 family.

In terms of biological role, binds together with bS18 to 16S ribosomal RNA. This Bordetella avium (strain 197N) protein is Small ribosomal subunit protein bS6.